The following is a 130-amino-acid chain: Large ribosomal subunit protein bL19 (130 aa).

This sequence belongs to the bacterial ribosomal protein bL19 family.

Its function is as follows. This protein is located at the 30S-50S ribosomal subunit interface and may play a role in the structure and function of the aminoacyl-tRNA binding site. This Burkholderia orbicola (strain MC0-3) protein is Large ribosomal subunit protein bL19.